Reading from the N-terminus, the 423-residue chain is MALASGPARRVLARPWGLGLEGCGVPRRGAYEWGVRSTRKPEPPPLDRVYEIPGLEPITFAGKMHFMPGLARPVFPPWDPGWTHPKFRRLPPLQEHPLYKDEVCYIFHQRCRLLEGVKQALWLTKTKLIEGLPEKVLSLADNPRNHIENQDERVLNVISHARLWHSTEDIPKRETYCPVIVDSLIQLCKSQILKHPSLARRICAQKNMLSTTWKRESTLIQVHGSSGAQLNAKDPLPPIASREEVEATKNHVLETFSPISPTISLQECHIYDVNDDTGFREGYPYPCPHTLYLLESANLRAHRFQPDQLRAKMILFAFGNALAQARLLYGNDPKVLEQPVVVQSVGTDGRVFQFLVLQLNTTDLASEEGIKNLVWVDSDQLLYQHFWCLPVIKKKVVVEPVGPTGFQPETFRKFLALYLHGAV.

A mitochondrion-targeting transit peptide spans 1–29 (MALASGPARRVLARPWGLGLEGCGVPRRG).

The protein belongs to the mitochondrion-specific ribosomal protein mL37 family. As to quaternary structure, component of the mitochondrial ribosome large subunit (39S) which comprises a 16S rRNA and about 50 distinct proteins.

The protein localises to the mitochondrion. This Bos taurus (Bovine) protein is Large ribosomal subunit protein mL37 (MRPL37).